Consider the following 33-residue polypeptide: Protamine-1A (33 aa).

The segment at 1-33 (PRRRRSSSRPVRRRRRPRRVSRRRRRRGGRRRR) is disordered.

In terms of tissue distribution, testis.

The protein localises to the nucleus. It is found in the chromosome. Protamines substitute for histones in the chromatin of sperm during the haploid phase of spermatogenesis. They compact sperm DNA into a highly condensed, stable and inactive complex. The protein is Protamine-1A of Oncorhynchus mykiss (Rainbow trout).